We begin with the raw amino-acid sequence, 313 residues long: MSTREIRIATRKSALALWQAEYVKARLEQAHPGLQVSLVPMVSRGDKLLDAPLAKIGGKGLFVKELETALLDNEADIAVHSMKDVPMDFPEGLGLYCICEREDPRDAFVSNTFKSLEALPAGSVVGTSSLRRQAQLLARRPDLEIRFLRGNVNTRLAKLDAGEYDAIILAAAGLVRLGFEDRITSTISVDDSLPAGGQGAVGIECRSADSEIHALLAPLHHIDTADRVVAERALNKRLNGGCQVPIACYAVLEGDQLWLRGLVGQPSGGTLLVADARAPRASAEALGVQVAEDLLSQGAEAILKEVYGEAGHP.

At cysteine 242 the chain carries S-(dipyrrolylmethanemethyl)cysteine.

Belongs to the HMBS family. As to quaternary structure, monomer. Requires dipyrromethane as cofactor.

The enzyme catalyses 4 porphobilinogen + H2O = hydroxymethylbilane + 4 NH4(+). The protein operates within porphyrin-containing compound metabolism; protoporphyrin-IX biosynthesis; coproporphyrinogen-III from 5-aminolevulinate: step 2/4. Functionally, tetrapolymerization of the monopyrrole PBG into the hydroxymethylbilane pre-uroporphyrinogen in several discrete steps. The protein is Porphobilinogen deaminase of Pseudomonas entomophila (strain L48).